Consider the following 174-residue polypeptide: ATP synthase subunit b (174 aa).

A helical membrane pass occupies residues 18 to 38; it reads IIVVSGSFLILMFLLKHFAWG.

Belongs to the ATPase B chain family. As to quaternary structure, F-type ATPases have 2 components, F(1) - the catalytic core - and F(0) - the membrane proton channel. F(1) has five subunits: alpha(3), beta(3), gamma(1), delta(1), epsilon(1). F(0) has three main subunits: a(1), b(2) and c(10-14). The alpha and beta chains form an alternating ring which encloses part of the gamma chain. F(1) is attached to F(0) by a central stalk formed by the gamma and epsilon chains, while a peripheral stalk is formed by the delta and b chains.

The protein resides in the cell membrane. Its function is as follows. F(1)F(0) ATP synthase produces ATP from ADP in the presence of a proton or sodium gradient. F-type ATPases consist of two structural domains, F(1) containing the extramembraneous catalytic core and F(0) containing the membrane proton channel, linked together by a central stalk and a peripheral stalk. During catalysis, ATP synthesis in the catalytic domain of F(1) is coupled via a rotary mechanism of the central stalk subunits to proton translocation. Functionally, component of the F(0) channel, it forms part of the peripheral stalk, linking F(1) to F(0). The protein is ATP synthase subunit b of Enterococcus hirae (strain ATCC 9790 / DSM 20160 / JCM 8729 / LMG 6399 / NBRC 3181 / NCIMB 6459 / NCDO 1258 / NCTC 12367 / WDCM 00089 / R).